The following is a 606-amino-acid chain: Peptide-N(4)-(N-acetyl-beta-glucosaminyl)asparagine amidase (606 aa).

The Thioredoxin domain occupies 2-108 (PVTEVGSLPE…IAEKIRQHYS (107 aa)). Zn(2+) is bound by residues cysteine 191, cysteine 194, cysteine 225, and cysteine 228. The active-site Nucleophile is the cysteine 251. Active-site residues include histidine 278 and aspartate 295. The PAW domain occupies 404-606 (DLGGRITGSE…SFSVKIWMKN (203 aa)).

Belongs to the transglutaminase-like superfamily. PNGase family. It depends on Zn(2+) as a cofactor.

The protein resides in the cytoplasm. The protein localises to the endoplasmic reticulum. The enzyme catalyses Hydrolysis of an N(4)-(acetyl-beta-D-glucosaminyl)asparagine residue in which the glucosamine residue may be further glycosylated, to yield a (substituted) N-acetyl-beta-D-glucosaminylamine and a peptide containing an aspartate residue.. Inhibited by Zn(2+) and z-VAD-fmk (caspase inhibitor) but unaffected by EDTA. In terms of biological role, specifically deglycosylates the denatured form of N-linked glycoproteins in the cytoplasm and assists their proteasome-mediated degradation. Cleaves the beta-aspartyl-glucosamine (GlcNAc) of the glycan and the amide side chain of Asn, converting Asn to Asp. Prefers proteins containing high-mannose over those bearing complex type oligosaccharides. Can recognize misfolded proteins in the endoplasmic reticulum that are exported to the cytosol to be destroyed and deglycosylate them, while it has no activity toward native proteins. Deglycosylation is a prerequisite for subsequent proteasome-mediated degradation of some, but not all, misfolded glycoproteins. Also displays oxidoreductase (thioredoxin) activity. Involved in regulating the expression of proteasomal subunits such as rpt-3 in order to confer resistance to proteasomal dysfunction. The polypeptide is Peptide-N(4)-(N-acetyl-beta-glucosaminyl)asparagine amidase (png-1) (Caenorhabditis elegans).